The chain runs to 255 residues: tRNA (guanine-N(7)-)-methyltransferase (255 aa).

A disordered region spans residues 1 to 35 (MTRTNDASGGGKLPRKRFYRARAHSNPLSDSHFPV). The segment covering 13 to 23 (LPRKRFYRARA) has biased composition (basic residues). Residues Gly75, 98-99 (EL), 131-132 (NS), and Leu151 contribute to the S-adenosyl-L-methionine site. Asp154 is a catalytic residue. 229 to 231 (TEE) contributes to the S-adenosyl-L-methionine binding site.

It belongs to the class I-like SAM-binding methyltransferase superfamily. TrmB family.

The protein resides in the nucleus. The catalysed reaction is guanosine(46) in tRNA + S-adenosyl-L-methionine = N(7)-methylguanosine(46) in tRNA + S-adenosyl-L-homocysteine. It functions in the pathway tRNA modification; N(7)-methylguanine-tRNA biosynthesis. Catalyzes the formation of N(7)-methylguanine at position 46 (m7G46) in tRNA. The polypeptide is tRNA (guanine-N(7)-)-methyltransferase (Zea mays (Maize)).